The following is a 346-amino-acid chain: Probable dual-specificity RNA methyltransferase RlmN (346 aa).

Glutamate 90 acts as the Proton acceptor in catalysis. Residues 96–330 (TRDRLTVCVS…VSVRASRGLD (235 aa)) form the Radical SAM core domain. Residues cysteine 103 and cysteine 335 are joined by a disulfide bond. The [4Fe-4S] cluster site is built by cysteine 110, cysteine 114, and cysteine 117. S-adenosyl-L-methionine contacts are provided by residues 157–158 (GE), serine 187, 216–218 (SLH), and asparagine 292. Cysteine 335 (S-methylcysteine intermediate) is an active-site residue.

The protein belongs to the radical SAM superfamily. RlmN family. [4Fe-4S] cluster serves as cofactor.

The protein resides in the cytoplasm. It carries out the reaction adenosine(2503) in 23S rRNA + 2 reduced [2Fe-2S]-[ferredoxin] + 2 S-adenosyl-L-methionine = 2-methyladenosine(2503) in 23S rRNA + 5'-deoxyadenosine + L-methionine + 2 oxidized [2Fe-2S]-[ferredoxin] + S-adenosyl-L-homocysteine. It catalyses the reaction adenosine(37) in tRNA + 2 reduced [2Fe-2S]-[ferredoxin] + 2 S-adenosyl-L-methionine = 2-methyladenosine(37) in tRNA + 5'-deoxyadenosine + L-methionine + 2 oxidized [2Fe-2S]-[ferredoxin] + S-adenosyl-L-homocysteine. Functionally, specifically methylates position 2 of adenine 2503 in 23S rRNA and position 2 of adenine 37 in tRNAs. This chain is Probable dual-specificity RNA methyltransferase RlmN, found in Synechococcus sp. (strain RCC307).